The sequence spans 249 residues: Probable transcriptional regulatory protein Sfum_0996 (249 aa).

This sequence belongs to the TACO1 family.

It localises to the cytoplasm. The chain is Probable transcriptional regulatory protein Sfum_0996 from Syntrophobacter fumaroxidans (strain DSM 10017 / MPOB).